The primary structure comprises 419 residues: Elongation factor Tu, chloroplastic (419 aa).

One can recognise a tr-type G domain in the interval lysine 10–aspartate 214. Positions glycine 19–threonine 26 are G1. Residue glycine 19 to threonine 26 participates in GTP binding. Threonine 26 contacts Mg(2+). Residues glycine 60–asparagine 64 are G2. The tract at residues aspartate 81–glycine 84 is G3. GTP contacts are provided by residues aspartate 81–histidine 85 and asparagine 136–aspartate 139. The interval asparagine 136–aspartate 139 is G4. The segment at serine 174 to leucine 176 is G5.

Belongs to the TRAFAC class translation factor GTPase superfamily. Classic translation factor GTPase family. EF-Tu/EF-1A subfamily.

It localises to the plastid. The protein resides in the chloroplast. The enzyme catalyses GTP + H2O = GDP + phosphate + H(+). Its function is as follows. GTP hydrolase that promotes the GTP-dependent binding of aminoacyl-tRNA to the A-site of ribosomes during protein biosynthesis. This Tetradesmus obliquus (Green alga) protein is Elongation factor Tu, chloroplastic (tufA).